Consider the following 334-residue polypeptide: GTPase Obg (334 aa).

Positions 1-159 (MRFVDEVVIK…KEVRLELNLL (159 aa)) constitute an Obg domain. An OBG-type G domain is found at 160–331 (ADIALLGLPN…LAKKLNEFLH (172 aa)). Residues 166-173 (GLPNAGKS), 191-195 (FTTMY), 212-215 (DIPG), 282-285 (NKID), and 312-314 (SAA) each bind GTP. Mg(2+) contacts are provided by serine 173 and threonine 193.

Belongs to the TRAFAC class OBG-HflX-like GTPase superfamily. OBG GTPase family. Monomer. Requires Mg(2+) as cofactor.

Its subcellular location is the cytoplasm. In terms of biological role, an essential GTPase which binds GTP, GDP and possibly (p)ppGpp with moderate affinity, with high nucleotide exchange rates and a fairly low GTP hydrolysis rate. Plays a role in control of the cell cycle, stress response, ribosome biogenesis and in those bacteria that undergo differentiation, in morphogenesis control. The protein is GTPase Obg of Francisella philomiragia subsp. philomiragia (strain ATCC 25017 / CCUG 19701 / FSC 153 / O#319-036).